Here is a 983-residue protein sequence, read N- to C-terminus: Nuclear factor NF-kappa-B p105 subunit (983 aa).

Residues 47 to 372 (PYLQIIEQPK…EVQRKRQKLM (326 aa)) enclose the RHD domain. The residue at position 66 (Cys66) is an S-nitrosocysteine. A Phosphoserine; by PKA modification is found at Ser342. The Nuclear localization signal motif lies at 365–370 (QRKRQK). Residues 377 to 397 (DGYGGGSGAGGGGMFGGGGGG) form a GRR region. The disordered stretch occupies residues 423–454 (KSNAGMKHELSNSTVKKDEESSDKQSDKWDTK). The span at 428–454 (MKHELSNSTVKKDEESSDKQSDKWDTK) shows a compositional bias: basic and acidic residues. 7 ANK repeats span residues 540–569 (NGDN…DMNY), 579–608 (LYQT…NVNL), 612–641 (HGNS…ASSM), 648–677 (EGLS…DVNA), 682–712 (SGRT…DVDS), 716–745 (DGTT…DPHV), and 769–799 (PGTT…AVSE). The Death domain occupies 804-891 (QGPLRELNES…EAIEVIQKAL (88 aa)). Ser938 is subject to Phosphoserine.

Active NF-kappa-B is a heterodimer of an about 50 kDa DNA-binding subunit and the weak DNA-binding subunit p65. Two heterodimers might form a labile tetramer. Generation of the NF-kappa-B p50 (Nuclear factor NF-kappa-B p50 subunit) transcription factor takes place both cotranslationally and post-translationally via non-mutually exclusive mechanisms. A cotranslational processing allows the production of both p50 and p105 (Nuclear factor NF-kappa-B p105 subunit) from a single NFKB1 mRNA. While translation occurs, the particular unfolded structure after the GRR repeat region acts as a substrate for the proteasome, promoting degradation of the C-terminus. The GRR acts as a proteasomal 'stop signal', protecting the region upstream of the GRR from degradation and promoting generation of p50. It is unclear if limited proteasome degradation during cotranslational processing depends on ubiquitination. NF-kappa-B p50 is also generated post-translationally following ubiquitination by the KPC complex, leading to limited processing by the proteasome downstream of the GRR region, thereby generating p50. In terms of processing, phosphorylation at the C-terminus by IKBKB/IKKB acts as a signal for ubiquitination and promotes either complete degradation or processing to generate the NF-kappa-B p50 (Nuclear factor NF-kappa-B p50 subunit). Phosphorylation at Ser-938 are required for BTRC/BTRCP-mediated ubiquitination and proteolysis. Phosphorylation at Ser-938 is also required for ubiquitination by the KPC complex and limited processing to generate NF-kappa-B p50 (Nuclear factor NF-kappa-B p50 subunit). Post-translationally, polyubiquitinated at multiple Lys residues in the C-terminus. Polyubiquitinated by the SCF(FBXW11) and SCF(BTRC) complexes following phosphorylation at Ser-938, leading to its complete degradation. In contrast, polyubiquitination by the KPC complex following phosphorylation at Ser-938 leads to limited proteosomal processing and generation of the active NF-kappa-B p50 (Nuclear factor NF-kappa-B p50 subunit). S-nitrosylation of Cys-66 affects DNA binding. In terms of processing, the covalent modification of cysteine by 15-deoxy-Delta12,14-prostaglandin-J2 is autocatalytic and reversible. It may occur as an alternative to other cysteine modifications, such as S-nitrosylation and S-palmitoylation.

The protein localises to the cytoplasm. Its subcellular location is the nucleus. Functionally, P105 is the precursor of the active p50 subunit (Nuclear factor NF-kappa-B p50 subunit) of the nuclear factor NF-kappa-B. The precursor protein itself does not bind to DNA. Acts as a cytoplasmic retention of attached NF-kappa-B proteins by p105. Its function is as follows. Constitutes the active form, which associates with RELA/p65 to form the NF-kappa-B p65-p50 complex to form a transcription factor. Together with RELA/p65, binds to the kappa-B consensus sequence 5'-GGRNNYYCC-3', located in the enhancer region of genes involved in immune response and acute phase reactions. The sequence is that of Nuclear factor NF-kappa-B p105 subunit (NFKB1) from Gallus gallus (Chicken).